Consider the following 1052-residue polypeptide: uncharacterized protein (1052 aa).

A Helicase ATP-binding domain is found at 389-561 (WINKGKTFAI…NKGGNYIMIN (173 aa)). 400–407 (SAMGTGKT) contributes to the ATP binding site.

The protein belongs to the mimivirus R1 family.

This is an uncharacterized protein from Acanthamoeba polyphaga mimivirus (APMV).